Here is a 352-residue protein sequence, read N- to C-terminus: Phosphoribosylformylglycinamidine cyclo-ligase (352 aa).

The protein belongs to the AIR synthase family.

Its subcellular location is the cytoplasm. It carries out the reaction 2-formamido-N(1)-(5-O-phospho-beta-D-ribosyl)acetamidine + ATP = 5-amino-1-(5-phospho-beta-D-ribosyl)imidazole + ADP + phosphate + H(+). Its pathway is purine metabolism; IMP biosynthesis via de novo pathway; 5-amino-1-(5-phospho-D-ribosyl)imidazole from N(2)-formyl-N(1)-(5-phospho-D-ribosyl)glycinamide: step 2/2. This is Phosphoribosylformylglycinamidine cyclo-ligase from Hahella chejuensis (strain KCTC 2396).